The chain runs to 252 residues: tRNA (guanine-N(1)-)-methyltransferase (252 aa).

Residues G113 and 133-138 (LGDYVL) each bind S-adenosyl-L-methionine.

The protein belongs to the RNA methyltransferase TrmD family. In terms of assembly, homodimer.

It is found in the cytoplasm. The enzyme catalyses guanosine(37) in tRNA + S-adenosyl-L-methionine = N(1)-methylguanosine(37) in tRNA + S-adenosyl-L-homocysteine + H(+). Its function is as follows. Specifically methylates guanosine-37 in various tRNAs. This is tRNA (guanine-N(1)-)-methyltransferase from Stenotrophomonas maltophilia (strain R551-3).